A 101-amino-acid polypeptide reads, in one-letter code: NADH-quinone oxidoreductase subunit K (101 aa).

A run of 3 helical transmembrane segments spans residues 4-24 (LAHF…GIFL), 30-50 (IVLL…FVAF), and 61-81 (VFVF…LAIL).

This sequence belongs to the complex I subunit 4L family. As to quaternary structure, NDH-1 is composed of 14 different subunits. Subunits NuoA, H, J, K, L, M, N constitute the membrane sector of the complex.

It localises to the cell inner membrane. The catalysed reaction is a quinone + NADH + 5 H(+)(in) = a quinol + NAD(+) + 4 H(+)(out). Functionally, NDH-1 shuttles electrons from NADH, via FMN and iron-sulfur (Fe-S) centers, to quinones in the respiratory chain. The immediate electron acceptor for the enzyme in this species is believed to be ubiquinone. Couples the redox reaction to proton translocation (for every two electrons transferred, four hydrogen ions are translocated across the cytoplasmic membrane), and thus conserves the redox energy in a proton gradient. This Cupriavidus necator (strain ATCC 17699 / DSM 428 / KCTC 22496 / NCIMB 10442 / H16 / Stanier 337) (Ralstonia eutropha) protein is NADH-quinone oxidoreductase subunit K.